Consider the following 247-residue polypeptide: Carboxy-S-adenosyl-L-methionine synthase (247 aa).

Residues tyrosine 39, 64-66 (GCS), 89-90 (DN), 117-118 (DI), asparagine 132, and arginine 199 each bind S-adenosyl-L-methionine.

This sequence belongs to the class I-like SAM-binding methyltransferase superfamily. Cx-SAM synthase family. As to quaternary structure, homodimer.

It carries out the reaction prephenate + S-adenosyl-L-methionine = carboxy-S-adenosyl-L-methionine + 3-phenylpyruvate + H2O. In terms of biological role, catalyzes the conversion of S-adenosyl-L-methionine (SAM) to carboxy-S-adenosyl-L-methionine (Cx-SAM). This chain is Carboxy-S-adenosyl-L-methionine synthase, found in Salmonella agona (strain SL483).